The sequence spans 140 residues: Sec-independent protein translocase protein TatB (140 aa).

The helical transmembrane segment at 1-21 threads the bilayer; sequence MFDIGFSELLLIAVVALVVLG. A disordered region spans residues 119 to 140; that stretch reads VHVTSPPPSTSTHGNNGQEKSQ. The segment covering 128-140 has biased composition (polar residues); sequence TSTHGNNGQEKSQ.

It belongs to the TatB family. In terms of assembly, the Tat system comprises two distinct complexes: a TatABC complex, containing multiple copies of TatA, TatB and TatC subunits, and a separate TatA complex, containing only TatA subunits. Substrates initially bind to the TatABC complex, which probably triggers association of the separate TatA complex to form the active translocon.

The protein resides in the cell inner membrane. Part of the twin-arginine translocation (Tat) system that transports large folded proteins containing a characteristic twin-arginine motif in their signal peptide across membranes. Together with TatC, TatB is part of a receptor directly interacting with Tat signal peptides. TatB may form an oligomeric binding site that transiently accommodates folded Tat precursor proteins before their translocation. The chain is Sec-independent protein translocase protein TatB from Xylella fastidiosa (strain 9a5c).